Reading from the N-terminus, the 196-residue chain is dTTP/UTP pyrophosphatase (196 aa).

Aspartate 77 serves as the catalytic Proton acceptor.

This sequence belongs to the Maf family. YhdE subfamily. A divalent metal cation serves as cofactor.

It is found in the cytoplasm. It carries out the reaction dTTP + H2O = dTMP + diphosphate + H(+). It catalyses the reaction UTP + H2O = UMP + diphosphate + H(+). Functionally, nucleoside triphosphate pyrophosphatase that hydrolyzes dTTP and UTP. May have a dual role in cell division arrest and in preventing the incorporation of modified nucleotides into cellular nucleic acids. The protein is dTTP/UTP pyrophosphatase of Christiangramia forsetii (strain DSM 17595 / CGMCC 1.15422 / KT0803) (Gramella forsetii).